The following is a 104-amino-acid chain: UPF0125 protein PSPTO_4512 (104 aa).

This sequence belongs to the UPF0125 (RnfH) family.

This is UPF0125 protein PSPTO_4512 from Pseudomonas syringae pv. tomato (strain ATCC BAA-871 / DC3000).